Reading from the N-terminus, the 118-residue chain is Large ribosomal subunit protein uL22 (118 aa).

It belongs to the universal ribosomal protein uL22 family. Part of the 50S ribosomal subunit.

Functionally, this protein binds specifically to 23S rRNA; its binding is stimulated by other ribosomal proteins, e.g. L4, L17, and L20. It is important during the early stages of 50S assembly. It makes multiple contacts with different domains of the 23S rRNA in the assembled 50S subunit and ribosome. Its function is as follows. The globular domain of the protein is located near the polypeptide exit tunnel on the outside of the subunit, while an extended beta-hairpin is found that lines the wall of the exit tunnel in the center of the 70S ribosome. The sequence is that of Large ribosomal subunit protein uL22 from Leuconostoc mesenteroides subsp. mesenteroides (strain ATCC 8293 / DSM 20343 / BCRC 11652 / CCM 1803 / JCM 6124 / NCDO 523 / NBRC 100496 / NCIMB 8023 / NCTC 12954 / NRRL B-1118 / 37Y).